The chain runs to 381 residues: Creatine kinase M-type (381 aa).

The Phosphagen kinase N-terminal domain maps to 11 to 98; the sequence is KLNYKPQEEY…FDPIIQDRHG (88 aa). The Phosphagen kinase C-terminal domain maps to 125–367; that stretch reads YVLSSRVRTG…KLMVEMEKKL (243 aa). 128 to 132 lines the ATP pocket; sequence SSRVR. S164 is modified (phosphoserine). The residue at position 166 (T166) is a Phosphothreonine. S178 carries the phosphoserine modification. A Phosphothreonine modification is found at T180. H191 serves as a coordination point for ATP. Residue S199 is modified to Phosphoserine. ATP is bound by residues R236 and R292. Phosphothreonine occurs at positions 313 and 322. Residues 320-325 and D335 contribute to the ATP site; that span reads RGTGGV. Residue S372 is modified to Phosphoserine.

It belongs to the ATP:guanido phosphotransferase family. As to quaternary structure, dimer of identical or non-identical chains, which can be either B (brain type) or M (muscle type). With MM being the major form in skeletal muscle and myocardium, MB existing in myocardium, and BB existing in many tissues, especially brain.

It is found in the cytoplasm. The enzyme catalyses creatine + ATP = N-phosphocreatine + ADP + H(+). Functionally, reversibly catalyzes the transfer of phosphate between ATP and various phosphogens (e.g. creatine phosphate). Creatine kinase isoenzymes play a central role in energy transduction in tissues with large, fluctuating energy demands, such as skeletal muscle, heart, brain and spermatozoa. The protein is Creatine kinase M-type (Ckm) of Mus musculus (Mouse).